The primary structure comprises 216 residues: ATP phosphoribosyltransferase (216 aa).

Belongs to the ATP phosphoribosyltransferase family. Short subfamily. Heteromultimer composed of HisG and HisZ subunits.

It is found in the cytoplasm. It carries out the reaction 1-(5-phospho-beta-D-ribosyl)-ATP + diphosphate = 5-phospho-alpha-D-ribose 1-diphosphate + ATP. It functions in the pathway amino-acid biosynthesis; L-histidine biosynthesis; L-histidine from 5-phospho-alpha-D-ribose 1-diphosphate: step 1/9. Functionally, catalyzes the condensation of ATP and 5-phosphoribose 1-diphosphate to form N'-(5'-phosphoribosyl)-ATP (PR-ATP). Has a crucial role in the pathway because the rate of histidine biosynthesis seems to be controlled primarily by regulation of HisG enzymatic activity. In Rubrobacter xylanophilus (strain DSM 9941 / JCM 11954 / NBRC 16129 / PRD-1), this protein is ATP phosphoribosyltransferase.